Consider the following 291-residue polypeptide: tRNA (guanine-N(1)-)-methyltransferase (291 aa).

S-adenosyl-L-methionine is bound by residues glycine 160 and isoleucine 184–leucine 189.

The protein belongs to the RNA methyltransferase TrmD family. In terms of assembly, homodimer.

The protein resides in the cytoplasm. It carries out the reaction guanosine(37) in tRNA + S-adenosyl-L-methionine = N(1)-methylguanosine(37) in tRNA + S-adenosyl-L-homocysteine + H(+). Its function is as follows. Specifically methylates guanosine-37 in various tRNAs. This is tRNA (guanine-N(1)-)-methyltransferase from Corynebacterium efficiens (strain DSM 44549 / YS-314 / AJ 12310 / JCM 11189 / NBRC 100395).